Consider the following 344-residue polypeptide: Heat-inducible transcription repressor HrcA (344 aa).

The protein belongs to the HrcA family.

Negative regulator of class I heat shock genes (grpE-dnaK-dnaJ and groELS operons). Prevents heat-shock induction of these operons. The protein is Heat-inducible transcription repressor HrcA of Moorella thermoacetica (strain ATCC 39073 / JCM 9320).